Reading from the N-terminus, the 176-residue chain is Ribosome maturation factor RimM (176 aa).

The 75-residue stretch at 95 to 169 (EDEVYLFELE…TARIAPPPGL (75 aa)) folds into the PRC barrel domain.

It belongs to the RimM family. In terms of assembly, binds ribosomal protein uS19.

It is found in the cytoplasm. Its function is as follows. An accessory protein needed during the final step in the assembly of 30S ribosomal subunit, possibly for assembly of the head region. Essential for efficient processing of 16S rRNA. May be needed both before and after RbfA during the maturation of 16S rRNA. It has affinity for free ribosomal 30S subunits but not for 70S ribosomes. The sequence is that of Ribosome maturation factor RimM from Nitratidesulfovibrio vulgaris (strain ATCC 29579 / DSM 644 / CCUG 34227 / NCIMB 8303 / VKM B-1760 / Hildenborough) (Desulfovibrio vulgaris).